Reading from the N-terminus, the 850-residue chain is Trimethylamine-N-oxide reductase (850 aa).

Positions 1–39 form a signal peptide, tat-type signal; it reads MKNKDSLHVSRRRFLAQLGGLTVAGMLGPSLLTPRSARA. Ser-191 is a binding site for Mo-bis(molybdopterin guanine dinucleotide).

Belongs to the prokaryotic molybdopterin-containing oxidoreductase family. Mo-bis(molybdopterin guanine dinucleotide) serves as cofactor. Predicted to be exported by the Tat system. The position of the signal peptide cleavage has not been experimentally proven.

The protein resides in the periplasm. It carries out the reaction trimethylamine + 2 Fe(III)-[cytochrome c] + H2O = trimethylamine N-oxide + 2 Fe(II)-[cytochrome c] + 3 H(+). Reduces trimethylamine-N-oxide (TMAO) into trimethylamine; an anaerobic reaction coupled to energy-yielding reactions. The sequence is that of Trimethylamine-N-oxide reductase (torA) from Salmonella typhimurium (strain LT2 / SGSC1412 / ATCC 700720).